Reading from the N-terminus, the 417-residue chain is Putative UDP-arabinose 4-epimerase 2 (417 aa).

Over Met1 to Asn31 the chain is Cytoplasmic. The chain crosses the membrane as a helical; Signal-anchor for type II membrane protein span at residues Tyr32–Pro54. Topologically, residues Thr55–Tyr417 are lumenal. His71–Leu102 is an NAD(+) binding site. The active-site Proton acceptor is Tyr219.

This sequence belongs to the NAD(P)-dependent epimerase/dehydratase family. It depends on NAD(+) as a cofactor.

Its subcellular location is the golgi apparatus. The protein resides in the golgi stack membrane. It catalyses the reaction UDP-beta-L-arabinopyranose = UDP-alpha-D-xylose. It functions in the pathway nucleotide-sugar biosynthesis; UDP-L-arabinose biosynthesis; UDP-L-arabinose from UDP-alpha-D-xylose: step 1/1. The protein operates within cell wall biogenesis; cell wall polysaccharide biosynthesis. This Arabidopsis thaliana (Mouse-ear cress) protein is Putative UDP-arabinose 4-epimerase 2.